The sequence spans 72 residues: MAVEKVNSSSSLAEVIDRILDKGIVVDAWVRVSLVGIELLAIEARVVVASVETYLKYAEAVGLTATAAAPAV.

Belongs to the gas vesicle GvpA family. In terms of assembly, the gas vesicle shell is 2 nm thick and consists of a single layer of this protein. It forms helical ribs nearly perpendicular to the long axis of the vesicle.

The protein localises to the gas vesicle shell. Its function is as follows. Gas vesicles are hollow, gas filled proteinaceous nanostructures found in some microorganisms. During planktonic growth they allow positioning of the organism at a favorable depth for light or nutrient acquisition. GvpA forms the protein shell. This is Gas vesicle protein A from Synechococcus sp. (strain JA-3-3Ab) (Cyanobacteria bacterium Yellowstone A-Prime).